Here is a 110-residue protein sequence, read N- to C-terminus: Ig lambda-1 chain V region S178 (110 aa).

The region spanning 1–106 (QAVVTQESAL…RWVFGGGTKL (106 aa)) is the Ig-like domain.

The polypeptide is Ig lambda-1 chain V region S178 (Mus musculus (Mouse)).